Consider the following 160-residue polypeptide: SsrA-binding protein (160 aa).

It belongs to the SmpB family.

It localises to the cytoplasm. Required for rescue of stalled ribosomes mediated by trans-translation. Binds to transfer-messenger RNA (tmRNA), required for stable association of tmRNA with ribosomes. tmRNA and SmpB together mimic tRNA shape, replacing the anticodon stem-loop with SmpB. tmRNA is encoded by the ssrA gene; the 2 termini fold to resemble tRNA(Ala) and it encodes a 'tag peptide', a short internal open reading frame. During trans-translation Ala-aminoacylated tmRNA acts like a tRNA, entering the A-site of stalled ribosomes, displacing the stalled mRNA. The ribosome then switches to translate the ORF on the tmRNA; the nascent peptide is terminated with the 'tag peptide' encoded by the tmRNA and targeted for degradation. The ribosome is freed to recommence translation, which seems to be the essential function of trans-translation. In Erwinia tasmaniensis (strain DSM 17950 / CFBP 7177 / CIP 109463 / NCPPB 4357 / Et1/99), this protein is SsrA-binding protein.